Consider the following 309-residue polypeptide: Wnt inhibitor of Dorsal protein (309 aa).

A signal peptide spans 1 to 16 (MIFAITFFMGITSTLA). 10 cysteine pairs are disulfide-bonded: Cys-51–Cys-62, Cys-102–Cys-110, Cys-112–Cys-121, Cys-162–Cys-179, Cys-164–Cys-174, Cys-232–Cys-269, Cys-248–Cys-262, Cys-266–Cys-308, Cys-284–Cys-299, and Cys-286–Cys-296.

Belongs to the Wnt family.

It localises to the secreted. The protein localises to the extracellular space. It is found in the extracellular matrix. Functionally, binds as a ligand to a family of frizzled seven-transmembrane receptors and acts through a cascade of genes on the nucleus. This chain is Wnt inhibitor of Dorsal protein (wntD), found in Drosophila melanogaster (Fruit fly).